A 419-amino-acid chain; its full sequence is POU domain, class 4, transcription factor 1 (419 aa).

Residues 57–66 (RAEALAAVDI) carry the POU-IV box motif. 2 disordered regions span residues 94–117 (STVP…GDLL) and 131–197 (AGGA…HSLG). Residues 99 to 108 (AHHHHHHHHH) show a composition bias toward basic residues. Residues 131-184 (AGGAGAAAGGGGAHDGPGGGGGPGGGGGPGGGPGGGGGGGPGGGGGGPGGGLLG) are compositionally biased toward gly residues. The region spanning 261–338 (SDTDPRELEA…LQAWLEEAEG (78 aa)) is the POU-specific domain. Residues 356–415 (KRKRTSIAAPEKRSLEAYFAVQPRPSSEKIAAIAEKLDLKKNVVRVWFCNQRQKQKRMKF) constitute a DNA-binding region (homeobox).

It belongs to the POU transcription factor family. Class-4 subfamily. In terms of assembly, interacts (via N-terminus) with RIT2; the interaction controls POU4F1 transactivation activity on some neuronal target genes. Isoform 1 interacts with POU4F2; this interaction inhibits both POU4F1 DNA-binding and transcriptional activities. Isoform 1 interacts (C-terminus) with ESR1 (via DNA-binding domain); this interaction decreases the estrogen receptor ESR1 transcriptional activity in a DNA- and ligand 17-beta-estradiol-independent manner. In terms of tissue distribution, expressed in the brain and the retina. Present in the developing brain, spinal cord and eye.

It is found in the nucleus. The protein resides in the cytoplasm. Multifunctional transcription factor with different regions mediating its different effects. Acts by binding (via its C-terminal domain) to sequences related to the consensus octamer motif 5'-ATGCAAAT-3' in the regulatory regions of its target genes. Regulates the expression of specific genes involved in differentiation and survival within a subset of neuronal lineages. It has been shown that activation of some of these genes requires its N-terminal domain, maybe through a neuronal-specific cofactor. Activates BCL2 expression and protects neuronal cells from apoptosis (via the N-terminal domain). Induces neuronal process outgrowth and the coordinate expression of genes encoding synaptic proteins. Exerts its major developmental effects in somatosensory neurons and in brainstem nuclei involved in motor control. Stimulates the binding affinity of the nuclear estrogene receptor ESR1 to DNA estrogen response element (ERE), and hence modulates ESR1-induced transcriptional activity. May positively regulate POU4F2 and POU4F3. Regulates dorsal root ganglion sensory neuron specification and axonal projection into the spinal cord. Plays a role in TNFSF11-mediated terminal osteoclast differentiation. Negatively regulates its own expression interacting directly with a highly conserved autoregulatory domain surrounding the transcription initiation site. Functionally, able to act as transcription factor, cannot regulate the expression of the same subset of genes than isoform 1. Does not have antiapoptotic effect on neuronal cells. This chain is POU domain, class 4, transcription factor 1, found in Homo sapiens (Human).